We begin with the raw amino-acid sequence, 241 residues long: Uridylate kinase (241 aa).

Residue 12 to 15 (KISG) participates in ATP binding. Residues 20–25 (GDKGNG) are involved in allosteric activation by GTP. Gly54 is a binding site for UMP. 2 residues coordinate ATP: Gly55 and Arg59. Residues Asp74 and 135–142 (TGNPYFST) each bind UMP. Asn163, Tyr169, and Asp172 together coordinate ATP.

Belongs to the UMP kinase family. In terms of assembly, homohexamer.

The protein localises to the cytoplasm. It catalyses the reaction UMP + ATP = UDP + ADP. It functions in the pathway pyrimidine metabolism; CTP biosynthesis via de novo pathway; UDP from UMP (UMPK route): step 1/1. Its activity is regulated as follows. Allosterically activated by GTP. Inhibited by UTP. Catalyzes the reversible phosphorylation of UMP to UDP. The protein is Uridylate kinase of Lactobacillus acidophilus (strain ATCC 700396 / NCK56 / N2 / NCFM).